Reading from the N-terminus, the 178-residue chain is MSRIGRLPITVPAGVEVKLDGSVISVKGAKGELSHTVASPIEVTQEENTLTVTRPNDERNSRSLHGLTRTLIANMIQGVTEGYEKKLEIVGTGYRVQAKGSDLEFALGYSHPVNVSAPEGITFVVEGPTKLSVAGINKQQVGEVAANIRKLRKPDPYKGKGVRYAGEVIRRKVGKAGK.

It belongs to the universal ribosomal protein uL6 family. As to quaternary structure, part of the 50S ribosomal subunit.

In terms of biological role, this protein binds to the 23S rRNA, and is important in its secondary structure. It is located near the subunit interface in the base of the L7/L12 stalk, and near the tRNA binding site of the peptidyltransferase center. This chain is Large ribosomal subunit protein uL6, found in Paenarthrobacter aurescens (strain TC1).